A 689-amino-acid chain; its full sequence is Long-chain-fatty-acid--CoA ligase 2 (689 aa).

252-263 (YTSGSTGKPKGV) contacts ATP. The FACS signature appears at 518–567 (DGWFKTGDVGEIAKGNTLRLIDRKKNIVKSLNGEYIALEKIEAQFFTSPL).

It belongs to the ATP-dependent AMP-binding enzyme family. It depends on Mg(2+) as a cofactor.

It localises to the golgi apparatus. Its subcellular location is the vacuole membrane. The catalysed reaction is a long-chain fatty acid + ATP + CoA = a long-chain fatty acyl-CoA + AMP + diphosphate. Esterification, concomitant with transport, of endogenous long-chain fatty acids into metabolically active CoA thioesters for subsequent degradation or incorporation into phospholipids. Plays an important role in the determination of viability in the stationary phase. The protein is Long-chain-fatty-acid--CoA ligase 2 (lcf2) of Schizosaccharomyces pombe (strain 972 / ATCC 24843) (Fission yeast).